The sequence spans 512 residues: tRNA-2-methylthio-N(6)-dimethylallyladenosine synthase (512 aa).

Positions 23 to 139 (RTYQVRTYGC…LPTLLERARH (117 aa)) constitute an MTTase N-terminal domain. Residues Cys-32, Cys-68, Cys-102, Cys-176, Cys-180, and Cys-183 each coordinate [4Fe-4S] cluster. One can recognise a Radical SAM core domain in the interval 162–398 (RESAYAAWVS…IELQERISLE (237 aa)). One can recognise a TRAM domain in the interval 401-469 (REQVGRAVEL…PHHLIADAPI (69 aa)). The segment at 477-512 (AGDAHAAGQKPRTGVGLGMPRIGAPAPSATAEGCGC) is disordered.

The protein belongs to the methylthiotransferase family. MiaB subfamily. In terms of assembly, monomer. Requires [4Fe-4S] cluster as cofactor.

The protein localises to the cytoplasm. The catalysed reaction is N(6)-dimethylallyladenosine(37) in tRNA + (sulfur carrier)-SH + AH2 + 2 S-adenosyl-L-methionine = 2-methylsulfanyl-N(6)-dimethylallyladenosine(37) in tRNA + (sulfur carrier)-H + 5'-deoxyadenosine + L-methionine + A + S-adenosyl-L-homocysteine + 2 H(+). In terms of biological role, catalyzes the methylthiolation of N6-(dimethylallyl)adenosine (i(6)A), leading to the formation of 2-methylthio-N6-(dimethylallyl)adenosine (ms(2)i(6)A) at position 37 in tRNAs that read codons beginning with uridine. In Mycolicibacterium smegmatis (strain ATCC 700084 / mc(2)155) (Mycobacterium smegmatis), this protein is tRNA-2-methylthio-N(6)-dimethylallyladenosine synthase.